The following is an 874-amino-acid chain: Alanine--tRNA ligase (874 aa).

Zn(2+)-binding residues include His-562, His-566, Cys-665, and His-669.

Belongs to the class-II aminoacyl-tRNA synthetase family. Zn(2+) is required as a cofactor.

The protein resides in the cytoplasm. It catalyses the reaction tRNA(Ala) + L-alanine + ATP = L-alanyl-tRNA(Ala) + AMP + diphosphate. Catalyzes the attachment of alanine to tRNA(Ala) in a two-step reaction: alanine is first activated by ATP to form Ala-AMP and then transferred to the acceptor end of tRNA(Ala). Also edits incorrectly charged Ser-tRNA(Ala) and Gly-tRNA(Ala) via its editing domain. The chain is Alanine--tRNA ligase from Pseudomonas savastanoi pv. phaseolicola (strain 1448A / Race 6) (Pseudomonas syringae pv. phaseolicola (strain 1448A / Race 6)).